Reading from the N-terminus, the 103-residue chain is MATYAIVKTGGKQYKVAVGDLVKVEKIEGEPGTAVSLAPVLVVDGSDLTTDADKLAKISVTGEVVEHTKGPKIRIHKFKNKTGYHKRQGHRQKLTVLKVTGIK.

Belongs to the bacterial ribosomal protein bL21 family. As to quaternary structure, part of the 50S ribosomal subunit. Contacts protein L20.

Functionally, this protein binds to 23S rRNA in the presence of protein L20. The protein is Large ribosomal subunit protein bL21 of Rhodococcus jostii (strain RHA1).